The primary structure comprises 1013 residues: Alpha-2-macroglobulin homolog (1013 aa).

The tract at residues Ala804–Asn844 is disordered.

Belongs to the protease inhibitor I39 (alpha-2-macroglobulin) family. Bacterial alpha-2-macroglobulin subfamily.

The polypeptide is Alpha-2-macroglobulin homolog (Deinococcus radiodurans (strain ATCC 13939 / DSM 20539 / JCM 16871 / CCUG 27074 / LMG 4051 / NBRC 15346 / NCIMB 9279 / VKM B-1422 / R1)).